The primary structure comprises 809 residues: Leucine--tRNA ligase (809 aa).

A 'HIGH' region motif is present at residues 40–51; the sequence is PYPSGQGLHVGH. Residues 581 to 585 carry the 'KMSKS' region motif; that stretch reads KMSKS. K584 serves as a coordination point for ATP.

It belongs to the class-I aminoacyl-tRNA synthetase family.

The protein resides in the cytoplasm. The enzyme catalyses tRNA(Leu) + L-leucine + ATP = L-leucyl-tRNA(Leu) + AMP + diphosphate. The sequence is that of Leucine--tRNA ligase from Levilactobacillus brevis (strain ATCC 367 / BCRC 12310 / CIP 105137 / JCM 1170 / LMG 11437 / NCIMB 947 / NCTC 947) (Lactobacillus brevis).